A 70-amino-acid chain; its full sequence is Cytochrome c oxidase subunit 8B, mitochondrial (70 aa).

Residues methionine 1–arginine 24 constitute a mitochondrion transit peptide. At isoleucine 25–serine 35 the chain is on the mitochondrial matrix side. Residues alanine 36–serine 59 form a helical membrane-spanning segment. The Mitochondrial intermembrane segment spans residues histidine 60–alanine 70.

The protein belongs to the cytochrome c oxidase VIII family. In terms of assembly, component of the cytochrome c oxidase (complex IV, CIV), a multisubunit enzyme composed of 14 subunits. The complex is composed of a catalytic core of 3 subunits MT-CO1, MT-CO2 and MT-CO3, encoded in the mitochondrial DNA, and 11 supernumerary subunits COX4I, COX5A, COX5B, COX6A, COX6B, COX6C, COX7A, COX7B, COX7C, COX8 and NDUFA4, which are encoded in the nuclear genome. The complex exists as a monomer or a dimer and forms supercomplexes (SCs) in the inner mitochondrial membrane with NADH-ubiquinone oxidoreductase (complex I, CI) and ubiquinol-cytochrome c oxidoreductase (cytochrome b-c1 complex, complex III, CIII), resulting in different assemblies (supercomplex SCI(1)III(2)IV(1) and megacomplex MCI(2)III(2)IV(2)).

Its subcellular location is the mitochondrion inner membrane. The protein operates within energy metabolism; oxidative phosphorylation. Its function is as follows. Component of the cytochrome c oxidase, the last enzyme in the mitochondrial electron transport chain which drives oxidative phosphorylation. The respiratory chain contains 3 multisubunit complexes succinate dehydrogenase (complex II, CII), ubiquinol-cytochrome c oxidoreductase (cytochrome b-c1 complex, complex III, CIII) and cytochrome c oxidase (complex IV, CIV), that cooperate to transfer electrons derived from NADH and succinate to molecular oxygen, creating an electrochemical gradient over the inner membrane that drives transmembrane transport and the ATP synthase. Cytochrome c oxidase is the component of the respiratory chain that catalyzes the reduction of oxygen to water. Electrons originating from reduced cytochrome c in the intermembrane space (IMS) are transferred via the dinuclear copper A center (CU(A)) of subunit 2 and heme A of subunit 1 to the active site in subunit 1, a binuclear center (BNC) formed by heme A3 and copper B (CU(B)). The BNC reduces molecular oxygen to 2 water molecules using 4 electrons from cytochrome c in the IMS and 4 protons from the mitochondrial matrix. In Rattus norvegicus (Rat), this protein is Cytochrome c oxidase subunit 8B, mitochondrial (Cox8b).